Consider the following 436-residue polypeptide: Transcriptional regulator STP3 (436 aa).

The segment at 204–277 is disordered; it reads EPLDDEFVPP…TKRKYTKKKQ (74 aa). Low complexity predominate over residues 230–265; that stretch reads ISPPASSDSSSSSSYVPQLIPSSSSSVTSNGDSPVS. Basic residues predominate over residues 268 to 277; the sequence is TKRKYTKKKQ. Residues 315 to 337 form a C2H2-type zinc finger; the sequence is FDCPSCDASFKVKGYLTRHLKKH.

Activated by the amino acid-induced proteolytic removal of an N-terminal inhibitory domain.

The protein localises to the cell membrane. It is found in the nucleus. Transcription factor that activates genes required for degradation of extracellular protein and uptake of peptides such as the secreted aspartyl protease SAP2 or the oligopeptide transporter OPT1. Required for virulence. Synthesized as latent cytoplasmic precursor, which, upon a signal initiated by the plasma membrane SPS amino acid sensor system (including CSY1 and CSH3), becomes proteolytically activated and relocates to the nucleus, where it induces the expression of SPS-sensor-regulated genes. This Candida albicans (strain SC5314 / ATCC MYA-2876) (Yeast) protein is Transcriptional regulator STP3 (STP3).